The following is a 330-amino-acid chain: tRNA(Ile)-lysidine synthase (330 aa).

Residue 31-36 participates in ATP binding; the sequence is SGGQDS.

It belongs to the tRNA(Ile)-lysidine synthase family.

Its subcellular location is the cytoplasm. The catalysed reaction is cytidine(34) in tRNA(Ile2) + L-lysine + ATP = lysidine(34) in tRNA(Ile2) + AMP + diphosphate + H(+). Functionally, ligates lysine onto the cytidine present at position 34 of the AUA codon-specific tRNA(Ile) that contains the anticodon CAU, in an ATP-dependent manner. Cytidine is converted to lysidine, thus changing the amino acid specificity of the tRNA from methionine to isoleucine. The protein is tRNA(Ile)-lysidine synthase of Synechocystis sp. (strain ATCC 27184 / PCC 6803 / Kazusa).